The sequence spans 329 residues: Replication factor C small subunit 1 (329 aa).

44–51 (GPPGTGKT) contributes to the ATP binding site.

This sequence belongs to the activator 1 small subunits family. RfcS subfamily. In terms of assembly, heteromultimer composed of small subunits (RfcS) and large subunits (RfcL).

Its function is as follows. Part of the RFC clamp loader complex which loads the PCNA sliding clamp onto DNA. The protein is Replication factor C small subunit 1 of Pyrobaculum arsenaticum (strain DSM 13514 / JCM 11321 / PZ6).